A 475-amino-acid chain; its full sequence is Tetratricopeptide repeat protein 29 (475 aa).

TPR repeat units lie at residues 92 to 131 (DALR…EDAE), 136 to 173 (FEDV…AQLI), 182 to 215 (AEAH…TQGR), 234 to 267 (LRTY…AKEG), 274 to 307 (GEAS…STEL), 314 to 347 (GRAY…ARNN), and 354 to 387 (VRAS…TVEL). A disordered region spans residues 436 to 475 (DIEPDPVTEEFRGSTVETVSQNSEHLEELSRFPGDQKNET). The segment covering 459-475 (EHLEELSRFPGDQKNET) has biased composition (basic and acidic residues).

The protein localises to the cytoplasm. Its subcellular location is the cytoskeleton. The protein resides in the flagellum axoneme. Functionally, axonemal protein which is implicated in axonemal and/or peri-axonemal structure assembly and regulates flagellum assembly and beating and therefore sperm motility. This is Tetratricopeptide repeat protein 29 (TTC29) from Macaca fascicularis (Crab-eating macaque).